The sequence spans 101 residues: Small ribosomal subunit protein bS18c (101 aa).

The span at 1-19 (MDKSKRPFRKSKRSFRRRL) shows a compositional bias: basic residues. Disordered regions lie at residues 1–23 (MDKS…PPIG) and 82–101 (KQFE…TRNK).

The protein belongs to the bacterial ribosomal protein bS18 family. As to quaternary structure, part of the 30S ribosomal subunit.

It localises to the plastid. It is found in the chloroplast. This chain is Small ribosomal subunit protein bS18c, found in Drimys granadensis.